Here is a 633-residue protein sequence, read N- to C-terminus: Lysophospholipase 1 (633 aa).

The N-terminal stretch at 1–20 (MKTTTVACAVAGLLFSCVSG) is a signal peptide. Positions 47–594 (GCPASRPTIR…QRYCWDGSLN (548 aa)) constitute a PLA2c domain. Asparagine 64, asparagine 104, asparagine 139, asparagine 173, asparagine 246, asparagine 290, asparagine 329, asparagine 358, asparagine 397, asparagine 450, asparagine 463, asparagine 469, asparagine 497, asparagine 500, asparagine 521, asparagine 549, asparagine 555, and asparagine 594 each carry an N-linked (GlcNAc...) asparagine glycan. Serine 609 carries the GPI-like-anchor amidated serine lipid modification. A propeptide spans 610-633 (AASGIIPSISTVAMAVVFAAWTIF) (removed in mature form).

The protein belongs to the lysophospholipase family. In terms of processing, the GPI-like anchor contains a phosphoceramide lipid group. The anchor position has not been determined.

It is found in the cell membrane. It carries out the reaction a 1-acyl-sn-glycero-3-phosphocholine + H2O = sn-glycerol 3-phosphocholine + a fatty acid + H(+). In terms of biological role, catalyzes the release of fatty acids from lysophospholipids. In Aspergillus fumigatus (strain CBS 144.89 / FGSC A1163 / CEA10) (Neosartorya fumigata), this protein is Lysophospholipase 1 (plb1).